Reading from the N-terminus, the 224-residue chain is Cytidylate kinase (224 aa).

Residue 11-19 (GPAAAGKST) coordinates ATP.

The protein belongs to the cytidylate kinase family. Type 1 subfamily.

The protein localises to the cytoplasm. It catalyses the reaction CMP + ATP = CDP + ADP. The enzyme catalyses dCMP + ATP = dCDP + ADP. The protein is Cytidylate kinase of Listeria innocua serovar 6a (strain ATCC BAA-680 / CLIP 11262).